The chain runs to 678 residues: UvrABC system protein C (678 aa).

In terms of domain architecture, GIY-YIG spans 16–95; the sequence is VEPGVYRFRD…IKEFDPRFNI (80 aa). Residues 208 to 243 enclose the UVR domain; that stretch reads DRLIREMEQQMNAAAEELDFERAARLRDNIGAMRRA. A disordered region spans residues 477 to 508; sequence HLRDAEAAPEGRPEQGPRASARPEQGPRASAR. Residues 479–491 show a composition bias toward basic and acidic residues; sequence RDAEAAPEGRPEQ.

The protein belongs to the UvrC family. In terms of assembly, interacts with UvrB in an incision complex.

It localises to the cytoplasm. Its function is as follows. The UvrABC repair system catalyzes the recognition and processing of DNA lesions. UvrC both incises the 5' and 3' sides of the lesion. The N-terminal half is responsible for the 3' incision and the C-terminal half is responsible for the 5' incision. The sequence is that of UvrABC system protein C from Mycolicibacterium vanbaalenii (strain DSM 7251 / JCM 13017 / BCRC 16820 / KCTC 9966 / NRRL B-24157 / PYR-1) (Mycobacterium vanbaalenii).